The following is a 256-amino-acid chain: MIRLETMKVVAQEEIAPAIFELVLEGEMVEAMRAGQFLHLRVPDDAHLLRRPISISSIDKANKQCHLIYRIEGAGTAIFSTLSQGDTLDVMGPQGNGFDLSDLDEQNQVLLVGGGIGVPPLLEVAKELHERGVKVVTVLGFANKDAVILKTELAQYGQVFVTTDDGSYGIKGNVSVVINDLDSQFDAVYSCGAPGMMKYINQTFDDHPRAYLSLESRMACGMGACYACVLKVPESETVSQRVCEDGPVFRTGTVVL.

One can recognise an FAD-binding FR-type domain in the interval 2–100 (IRLETMKVVA…MGPQGNGFDL (99 aa)). FAD-binding positions include 51–54 (RPIS), 68–70 (IYR), and 75–76 (GT). Positions 220, 225, 228, and 243 each coordinate [2Fe-2S] cluster.

This sequence belongs to the PyrK family. Heterotetramer of 2 PyrK and 2 PyrD type B subunits. Requires [2Fe-2S] cluster as cofactor. FAD serves as cofactor.

Its pathway is pyrimidine metabolism; UMP biosynthesis via de novo pathway; orotate from (S)-dihydroorotate (NAD(+) route): step 1/1. In terms of biological role, responsible for channeling the electrons from the oxidation of dihydroorotate from the FMN redox center in the PyrD type B subunit to the ultimate electron acceptor NAD(+). This Streptococcus pneumoniae (strain ATCC BAA-255 / R6) protein is Dihydroorotate dehydrogenase B (NAD(+)), electron transfer subunit.